Reading from the N-terminus, the 412-residue chain is L-cysteine:1D-myo-inositol 2-amino-2-deoxy-alpha-D-glucopyranoside ligase (412 aa).

Cys-45 contacts Zn(2+). L-cysteinyl-5'-AMP contacts are provided by residues 45-48, Thr-60, and 83-85; these read CGIT and NIT. Positions 47 to 57 match the 'HIGH' region motif; that stretch reads ITPYDAAHLGH. Residues 185 to 190 carry the 'ERGGDP' region motif; that stretch reads ERGGDP. Residue Trp-225 coordinates L-cysteinyl-5'-AMP. Residue Cys-229 coordinates Zn(2+). 247-249 lines the L-cysteinyl-5'-AMP pocket; the sequence is GDD. His-254 provides a ligand contact to Zn(2+). Position 281 (Val-281) interacts with L-cysteinyl-5'-AMP. A 'KMSKS' region motif is present at residues 287–291; sequence KMSKS.

It belongs to the class-I aminoacyl-tRNA synthetase family. MshC subfamily. Monomer. It depends on Zn(2+) as a cofactor.

It carries out the reaction 1D-myo-inositol 2-amino-2-deoxy-alpha-D-glucopyranoside + L-cysteine + ATP = 1D-myo-inositol 2-(L-cysteinylamino)-2-deoxy-alpha-D-glucopyranoside + AMP + diphosphate + H(+). Its function is as follows. Catalyzes the ATP-dependent condensation of GlcN-Ins and L-cysteine to form L-Cys-GlcN-Ins. This chain is L-cysteine:1D-myo-inositol 2-amino-2-deoxy-alpha-D-glucopyranoside ligase, found in Thermobifida fusca (strain YX).